The following is a 597-amino-acid chain: MFASCHCVPRGRRTMKMIHFRSSSIKSLSQEMRCTIRLLDDSEISCHIQRETKGQFLIDHICNYYSLLEKDYFGIRYVDPEKQRHWLEPNKSIFKQMKTHPPYTMCFRVKFYPHEPLKIKEELTRYLLYLQIKRDIFHGRLLCSFSDAAYLGACIVQAELGDYDPDEHPENYISEFEIFPKQSQKLERKIVEIHKNELRGQSPPVAEFNLLLKAHTLETYGVDPHPCKDSTGTTTFLGFTAAGFVVFQGNKRIHLIKWPDVCKLKFEGKTFYVIGTQKEKKAMLAFHTSTPAACKHLWKCGVENQAFYKYAKSSQIKTVSSSKIFFKGSRFRYSGKVAKEVVEASSKIQREPPEVHRANITQSRSSHSLNKQLIINMEPLQPLLSSPSEQEEELPLGEGVPLPKEENISAPLISSSPVKAAQEYEDPPSEEEDKIKEEPLTISELVYNPSASLLPTPVDDDEIDMLFDCPSRLELEREDTDSFEDLEADENAFLIAEEEELKEARRALSWSYDILTGHIRVNPLVKSFSRLLVVGLGLLLFVFPLLLLLLESGIDLSFLCEIRQTPEFEQFHYEYYCPLKEWVTGKVHRILYMLGCS.

Residues 32–312 (MRCTIRLLDD…ENQAFYKYAK (281 aa)) enclose the FERM domain. Residues 409 to 435 (SAPLISSSPVKAAQEYEDPPSEEEDKI) are disordered. Over residues 423-432 (EYEDPPSEEE) the composition is skewed to acidic residues. The chain crosses the membrane as a helical span at residues 531–551 (LLVVGLGLLLFVFPLLLLLLE).

The protein localises to the membrane. Functionally, putative tumor suppressor gene that may be implicated in the origin and progression of lung cancer. In Pongo abelii (Sumatran orangutan), this protein is FERM domain-containing protein 3 (FRMD3).